A 126-amino-acid polypeptide reads, in one-letter code: Aspartate 1-decarboxylase (126 aa).

The active-site Schiff-base intermediate with substrate; via pyruvic acid is Ser-25. Ser-25 bears the Pyruvic acid (Ser) mark. Thr-57 provides a ligand contact to substrate. Tyr-58 (proton donor) is an active-site residue. 73–75 (GAA) serves as a coordination point for substrate.

Belongs to the PanD family. In terms of assembly, heterooctamer of four alpha and four beta subunits. The cofactor is pyruvate. Is synthesized initially as an inactive proenzyme, which is activated by self-cleavage at a specific serine bond to produce a beta-subunit with a hydroxyl group at its C-terminus and an alpha-subunit with a pyruvoyl group at its N-terminus.

It localises to the cytoplasm. The catalysed reaction is L-aspartate + H(+) = beta-alanine + CO2. The protein operates within cofactor biosynthesis; (R)-pantothenate biosynthesis; beta-alanine from L-aspartate: step 1/1. In terms of biological role, catalyzes the pyruvoyl-dependent decarboxylation of aspartate to produce beta-alanine. In Saccharophagus degradans (strain 2-40 / ATCC 43961 / DSM 17024), this protein is Aspartate 1-decarboxylase.